We begin with the raw amino-acid sequence, 275 residues long: Nitrate import permease protein NrtB (275 aa).

7 helical membrane-spanning segments follow: residues 25–45, 89–109, 120–140, 147–167, 189–209, 213–233, and 238–258; these read VIRP…LCSG, VAVG…LIGS, IFQV…LAAL, AIFV…TVGA, FFNI…RIGI, WLAI…FFIW, and SSLI…GLLL. An ABC transmembrane type-1 domain is found at 82–262; it reads IFASLTRVAV…IVGLLLDRFI (181 aa).

This sequence belongs to the binding-protein-dependent transport system permease family. CysTW subfamily. As to quaternary structure, the complex is composed of two ATP-binding proteins (NrtC and NrtD), two transmembrane proteins (NrtB) and a solute-binding protein (NrtA).

It is found in the cell inner membrane. Functionally, part of the ABC transporter complex NrtABCD involved in nitrate uptake. The complex is probably also involved in nitrite transport. Probably responsible for the translocation of the substrate across the membrane. The protein is Nitrate import permease protein NrtB (nrtB) of Synechocystis sp. (strain ATCC 27184 / PCC 6803 / Kazusa).